A 509-amino-acid polypeptide reads, in one-letter code: Lysine--tRNA ligase (509 aa).

Residues 1-18 are compositionally biased toward polar residues; it reads MSEQNPTQAAKQAPQQEL. The segment at 1–20 is disordered; that stretch reads MSEQNPTQAAKQAPQQELND. Glutamate 418 and glutamate 425 together coordinate Mg(2+).

It belongs to the class-II aminoacyl-tRNA synthetase family. Homodimer. Mg(2+) is required as a cofactor.

It is found in the cytoplasm. The enzyme catalyses tRNA(Lys) + L-lysine + ATP = L-lysyl-tRNA(Lys) + AMP + diphosphate. In Psychromonas ingrahamii (strain DSM 17664 / CCUG 51855 / 37), this protein is Lysine--tRNA ligase.